The chain runs to 296 residues: Nucleotide-binding protein stu0831 (296 aa).

An ATP-binding site is contributed by 13-20; sequence GMSGAGKT. A GTP-binding site is contributed by 63 to 66; it reads DMRS.

It belongs to the RapZ-like family.

Displays ATPase and GTPase activities. This chain is Nucleotide-binding protein stu0831, found in Streptococcus thermophilus (strain ATCC BAA-250 / LMG 18311).